The sequence spans 409 residues: MQRFFSARSILGYAVKTRRRSFSSRSSSLLFDDTQLQFKESVSKFAQDNIAPHAERIDKTNSFPKDVNLWKLMGEFNLHGITAPEEYGGLGLGYLYHCIAMEEISRASGSVALSYGAHSNLCINQLVRNGTAAQKEKYLPKLISGEHVGALAMSEPNAGSDVVGMKCKAEKVDGGYILNGNKMWCTNGPSAETLVVYAKTDTKAGSKGITAFIIEKGMTGFSTAQKLDKLGMRGSDTCELVFENCFVPEENILDKEGKGVYVLMSGLDLERLVLAAGPLGIMQACLDNVLPYIRQREQFGRPVGEFQFIQGKVADMYTALQSSRSYVYSVARDCDNGKVDPKDCAGTILCAAERATQVALQAIQCLGGNGYINEYATGRLLRDAKLYEIGAGTSEIRRIVIGRELFKEE.

The transit peptide at 1–22 (MQRFFSARSILGYAVKTRRRSF) directs the protein to the mitochondrion. FAD-binding positions include 151–160 (LAMSEPNAGS) and 184–186 (WCT). Position 160 (Ser160) interacts with substrate. Substrate-binding positions include 206-207 (SK), Tyr261, and 268-271 (DLER). The active-site Proton acceptor is Glu270. Residues Arg296, Gln307, and 364–368 (QCLGG) each bind FAD. Residue 391–392 (AG) coordinates substrate. 393 to 395 (TSE) lines the FAD pocket.

Belongs to the acyl-CoA dehydrogenase family. In terms of assembly, homodimer. Requires FAD as cofactor. As to expression, expressed in leaves, stems and flowers. Not detected in roots.

Its subcellular location is the mitochondrion. It carries out the reaction 3-methylbutanoyl-CoA + oxidized [electron-transfer flavoprotein] + H(+) = 3-methylbut-2-enoyl-CoA + reduced [electron-transfer flavoprotein]. The protein operates within amino-acid degradation; L-leucine degradation; (S)-3-hydroxy-3-methylglutaryl-CoA from 3-isovaleryl-CoA: step 1/3. Functionally, involved in degradation of the branched-chain amino acids, phytol and lysine for the supply of carbon and electrons to the ETF/ETFQO complex during dark-induced sugar starvation. This Arabidopsis thaliana (Mouse-ear cress) protein is Isovaleryl-CoA dehydrogenase, mitochondrial (IVD).